The following is a 700-amino-acid chain: DNA topoisomerase 1 (700 aa).

The region spanning 3-114 is the Toprim domain; it reads KNLIIVESPA…TLPRIVFHEI (112 aa). Mg(2+) contacts are provided by E9 and D83. A Topo IA-type catalytic domain is found at 130-553; the sequence is NMHSVNAQQT…EFYYPFMRKI (424 aa). The tract at residues 164–169 is interaction with DNA; that stretch reads SAGRVQ. Catalysis depends on Y298, which acts as the O-(5'-phospho-DNA)-tyrosine intermediate. C4-type zinc fingers lie at residues 573-599, 629-656, and 669-692; these read CPDC…FPKC, CPSC…YPKC, and CEEC…CLKC.

It belongs to the type IA topoisomerase family. Monomer. The cofactor is Mg(2+).

It carries out the reaction ATP-independent breakage of single-stranded DNA, followed by passage and rejoining.. Its function is as follows. Releases the supercoiling and torsional tension of DNA, which is introduced during the DNA replication and transcription, by transiently cleaving and rejoining one strand of the DNA duplex. Introduces a single-strand break via transesterification at a target site in duplex DNA. The scissile phosphodiester is attacked by the catalytic tyrosine of the enzyme, resulting in the formation of a DNA-(5'-phosphotyrosyl)-enzyme intermediate and the expulsion of a 3'-OH DNA strand. The free DNA strand then undergoes passage around the unbroken strand, thus removing DNA supercoils. Finally, in the religation step, the DNA 3'-OH attacks the covalent intermediate to expel the active-site tyrosine and restore the DNA phosphodiester backbone. This Campylobacter jejuni subsp. jejuni serotype O:2 (strain ATCC 700819 / NCTC 11168) protein is DNA topoisomerase 1.